The primary structure comprises 261 residues: tRNA pseudouridine synthase A (261 aa).

Residue aspartate 52 is the Nucleophile of the active site. Tyrosine 110 provides a ligand contact to substrate.

It belongs to the tRNA pseudouridine synthase TruA family. As to quaternary structure, homodimer.

It catalyses the reaction uridine(38/39/40) in tRNA = pseudouridine(38/39/40) in tRNA. Its function is as follows. Formation of pseudouridine at positions 38, 39 and 40 in the anticodon stem and loop of transfer RNAs. This chain is tRNA pseudouridine synthase A, found in Coxiella burnetii (strain CbuK_Q154) (Coxiella burnetii (strain Q154)).